A 281-amino-acid polypeptide reads, in one-letter code: Auxin-responsive protein IAA10 (281 aa).

2 disordered regions span residues 1 to 115 and 130 to 157; these read MRGG…VVGW and AKENTSETDTKKTATNESDVQKDKEEGE. Residues 7–17 show a composition bias toward low complexity; the sequence is GPTAGEPPGTE. The segment covering 18-35 has biased composition (acidic residues); that stretch reads AEAEEVEESSAGDDEELE. The short motif at 36–40 is the EAR-like (transcriptional repression) element; it reads LGLSL. Low complexity-rich tracts occupy residues 36–49 and 63–84; these read LGLSLGSKKQQQQQ and PAAALSPDSSVSSSSPAAAAAA. The segment covering 133–157 has biased composition (basic and acidic residues); sequence NTSETDTKKTATNESDVQKDKEEGE. The 97-residue stretch at 163 to 259 folds into the PB1 domain; the sequence is AGWVKVNMDG…KRLRIMRTSD (97 aa).

Belongs to the Aux/IAA family. Homodimers and heterodimers. Highly expressed in flowers. Expressed in shoots.

The protein resides in the nucleus. Its function is as follows. Aux/IAA proteins are short-lived transcriptional factors that function as repressors of early auxin response genes at low auxin concentrations. The sequence is that of Auxin-responsive protein IAA10 (IAA10) from Oryza sativa subsp. indica (Rice).